The sequence spans 385 residues: Probable endopeptidase MT2245 (385 aa).

The span at 235 to 257 (AALPPGAPPGDGPAPGVAPPPGG) shows a compositional bias: pro residues. The segment at 235-268 (AALPPGAPPGDGPAPGVAPPPGGMPGLPFVQPDG) is disordered. Positions 270–385 (GGDRTAVVQA…SGPIYDARRY (116 aa)) constitute a NlpC/P60 domain. Cysteine 300 serves as the catalytic Nucleophile. Histidine 348 serves as the catalytic Proton acceptor. Histidine 360 is a catalytic residue.

It belongs to the peptidase C40 family.

This chain is Probable endopeptidase MT2245, found in Mycobacterium tuberculosis (strain CDC 1551 / Oshkosh).